Consider the following 595-residue polypeptide: 3-hydroxy-3-methylglutaryl-coenzyme A reductase 2 (595 aa).

A glycan (N-linked (GlcNAc...) asparagine) is linked at Asn-35. The next 2 membrane-spanning stretches (helical) occupy residues 48 to 68 and 92 to 112; these read LPLY…MYFL and AIVS…IGFV. The tract at residues 113 to 183 is linker; it reads QTFVSRGNND…SPLITPASSE (71 aa). The N-linked (GlcNAc...) asparagine glycan is linked to Asn-121. Positions 184–595 are catalytic; it reads EDEEIINSVV…KYNRSTKASS (412 aa). Glu-278 functions as the Charge relay system in the catalytic mechanism. N-linked (GlcNAc...) asparagine glycosylation occurs at Asn-342. Lys-410 acts as the Charge relay system in catalysis. Asn-455 carries N-linked (GlcNAc...) asparagine glycosylation. Asp-486 functions as the Charge relay system in the catalytic mechanism. The Proton donor role is filled by His-584. Asn-588 carries an N-linked (GlcNAc...) asparagine glycan.

This sequence belongs to the HMG-CoA reductase family. In terms of tissue distribution, expressed in young flowers and in mature sepals and ovaries.

The protein localises to the endoplasmic reticulum membrane. The enzyme catalyses (R)-mevalonate + 2 NADP(+) + CoA = (3S)-3-hydroxy-3-methylglutaryl-CoA + 2 NADPH + 2 H(+). It participates in metabolic intermediate biosynthesis; (R)-mevalonate biosynthesis; (R)-mevalonate from acetyl-CoA: step 3/3. Catalyzes the synthesis of mevalonate. The specific precursor of all isoprenoid compounds present in plants. The polypeptide is 3-hydroxy-3-methylglutaryl-coenzyme A reductase 2 (HMG2) (Solanum tuberosum (Potato)).